We begin with the raw amino-acid sequence, 62 residues long: UPF0291 protein CLI_2672 (62 aa).

Belongs to the UPF0291 family.

Its subcellular location is the cytoplasm. The protein is UPF0291 protein CLI_2672 of Clostridium botulinum (strain Langeland / NCTC 10281 / Type F).